Reading from the N-terminus, the 586-residue chain is MVGLKEELLKAIWHAFTALDLDRSGKVSKSQLKVLSHNLCTVLNVPHDPVALEEHFRDDDEGPVSNQGYMPYLNKFILEKVQGNFDKVEFNRMCWTLCAKKNLSKSPLLISDEDAFKVWVIFNFLSEDKYPLIIVPEEVEYLLKKLTEAMGAGWQQEQFDLYKIALNTSREGLSAWELIDLIGSGQFSKGMDRQTVSMAINEVFNELILDVLKQGYMLKKGHKRKNWTERWFVLKPNIISYYVSEDLKDKKGDIILDGNCCVEPLPDKDGKKCLFLIKCLDKSFEISASDKKKKQEWIQAIQTTVSLLRAGSPPPHKEARQKRKELRQKLLAEQEELERQMKELQTANENKQKELETVRKQLEAAAARAAEEEKKRLQTQVELQDRFSLELEREKMVRQKMEEQVAQKSSELEQYLQRVRELEEMYKQLQEALEVEKQARQDEETVRKLQARLLEEESAKRAELEKWHLQQQQTIQMTEAEKQELENQRMIKEQALQVAMQQLEQLELERKEALEQYEEVKKKLETAANNTRSWKDKVAHHEGLIRLIEPGSKNPHLITNWGPAAFTEAELEQRQKSWKGKKASSE.

Positions 210–306 (DVLKQGYMLK…WIQAIQTTVS (97 aa)) constitute a PH domain. A coiled-coil region spans residues 316–538 (HKEARQKRKE…NNTRSWKDKV (223 aa)).

In terms of assembly, the SWAP complex consists of NPM1, NCL, PARP1 and SWAP70. In terms of processing, tyrosine-phosphorylated.

The protein resides in the cytoplasm. Its subcellular location is the cell membrane. The protein localises to the nucleus. It localises to the cell projection. It is found in the lamellipodium. Functionally, phosphatidylinositol 3,4,5-trisphosphate-dependent guanine nucleotide exchange factor (GEF) which, independently of RAS, transduces signals from tyrosine kinase receptors to RAC. It also mediates signaling of membrane ruffling. Regulates the actin cytoskeleton as an effector or adapter protein in response to agonist stimulated phosphatidylinositol (3,4)-bisphosphate production and cell protrusion. This Gallus gallus (Chicken) protein is Switch-associated protein 70 (SWAP70).